A 339-amino-acid chain; its full sequence is Ketol-acid reductoisomerase (NADP(+)) (339 aa).

One can recognise a KARI N-terminal Rossmann domain in the interval 1 to 182 (MRVYYDRDAD…GGGRSGIIET (182 aa)). NADP(+)-binding positions include 24-27 (YGSQ), K48, S51, T53, and 83-86 (DELQ). The active site involves H108. G134 serves as a coordination point for NADP(+). The region spanning 183 to 328 (NFREECETDL…AKLRGMMPWI (146 aa)) is the KARI C-terminal knotted domain. D191, E195, E227, and E231 together coordinate Mg(2+). Residue S252 participates in substrate binding.

It belongs to the ketol-acid reductoisomerase family. The cofactor is Mg(2+).

It catalyses the reaction (2R)-2,3-dihydroxy-3-methylbutanoate + NADP(+) = (2S)-2-acetolactate + NADPH + H(+). It carries out the reaction (2R,3R)-2,3-dihydroxy-3-methylpentanoate + NADP(+) = (S)-2-ethyl-2-hydroxy-3-oxobutanoate + NADPH + H(+). It functions in the pathway amino-acid biosynthesis; L-isoleucine biosynthesis; L-isoleucine from 2-oxobutanoate: step 2/4. The protein operates within amino-acid biosynthesis; L-valine biosynthesis; L-valine from pyruvate: step 2/4. Its function is as follows. Involved in the biosynthesis of branched-chain amino acids (BCAA). Catalyzes an alkyl-migration followed by a ketol-acid reduction of (S)-2-acetolactate (S2AL) to yield (R)-2,3-dihydroxy-isovalerate. In the isomerase reaction, S2AL is rearranged via a Mg-dependent methyl migration to produce 3-hydroxy-3-methyl-2-ketobutyrate (HMKB). In the reductase reaction, this 2-ketoacid undergoes a metal-dependent reduction by NADPH to yield (R)-2,3-dihydroxy-isovalerate. This chain is Ketol-acid reductoisomerase (NADP(+)), found in Rhizobium rhizogenes (strain K84 / ATCC BAA-868) (Agrobacterium radiobacter).